The sequence spans 126 residues: Fumarate reductase subunit C (126 aa).

3 helical membrane-spanning segments follow: residues 30–50 (IFVA…GAGG), 64–84 (VVVV…VTWF), and 105–125 (VLAG…WMVL).

It belongs to the FrdC family. In terms of assembly, part of an enzyme complex containing four subunits: a flavoprotein (FrdA), an iron-sulfur protein (FrdB), and two hydrophobic anchor proteins (FrdC and FrdD).

Its subcellular location is the cell membrane. Anchors the catalytic components of the fumarate reductase complex to the cell membrane, binds quinones. This Mycobacterium tuberculosis (strain CDC 1551 / Oshkosh) protein is Fumarate reductase subunit C.